A 618-amino-acid chain; its full sequence is Cytosolic Fe-S cluster assembly factor NAR1 (618 aa).

[4Fe-4S] cluster contacts are provided by Cys-20, Cys-61, Cys-64, Cys-67, Cys-212, Cys-267, Cys-471, and Cys-475. Disordered regions lie at residues 495-516 (TSSI…TPQE) and 530-560 (SADS…PESR).

It belongs to the NARF family.

Functionally, component of the cytosolic Fe/S protein assembly machinery. Required for maturation of extramitochondrial Fe/S proteins. May play a role in the transfer of pre-assembled Fe/S clusters to target apoproteins. The protein is Cytosolic Fe-S cluster assembly factor NAR1 (NAR1) of Coccidioides immitis (strain RS) (Valley fever fungus).